A 514-amino-acid chain; its full sequence is Probable outer membrane protein pmp12 (514 aa).

The first 21 residues, Met-1–Ala-21, serve as a signal peptide directing secretion.

The protein belongs to the PMP outer membrane protein family.

It localises to the secreted. The protein localises to the cell wall. The protein resides in the cell outer membrane. The sequence is that of Probable outer membrane protein pmp12 (pmp12) from Chlamydia pneumoniae (Chlamydophila pneumoniae).